The primary structure comprises 298 residues: NADH-cytochrome b5 reductase 1 (298 aa).

The chain crosses the membrane as a helical span at residues 14 to 34 (VILAGAYLIDPSALPFVAAGV). One can recognise an FAD-binding FR-type domain in the interval 56–159 (KEYRKFKLVD…RGPKGQFSYT (104 aa)). Residues 139-154 (SELS…GPKG) and 165-197 (AIGM…QVNF) contribute to the FAD site.

The protein belongs to the flavoprotein pyridine nucleotide cytochrome reductase family. As to quaternary structure, monomer. Component of the 2-(3-amino-3-carboxypropyl)histidine synthase complex composed of DPH1, DPH2, DPH3 and a NADH-dependent reductase, predominantly CBR1. Requires FAD as cofactor.

It is found in the mitochondrion outer membrane. The enzyme catalyses 2 Fe(III)-[cytochrome b5] + NADH = 2 Fe(II)-[cytochrome b5] + NAD(+) + H(+). It carries out the reaction 2 Fe(3+)-[Dph3] + NADH = 2 Fe(2+)-[Dph3] + NAD(+) + H(+). It participates in protein modification; peptidyl-diphthamide biosynthesis. In terms of biological role, NADH-dependent reductase for DPH3 and cytochrome b5. Required for the first step of diphthamide biosynthesis, a post-translational modification of histidine which occurs in elongation factor 2. DPH1 and DPH2 transfer a 3-amino-3-carboxypropyl (ACP) group from S-adenosyl-L-methionine (SAM) to a histidine residue, the reaction is assisted by a reduction system comprising DPH3 and a NADH-dependent reductase, predominantly CBR1. By reducing DPH3, also involved in the formation of the tRNA wobble base modification mcm5s 2U (5-methoxycarbonylmethyl-2-thiouridine), mediated by the elongator complex. The cytochrome b5/NADH cytochrome b5 reductase electron transfer system supports the catalytic activity of several sterol biosynthetic enzymes. In Mortierella alpina (Oleaginous fungus), this protein is NADH-cytochrome b5 reductase 1 (CBR1).